The chain runs to 958 residues: MERRAEAPPPPQGLDFTVENVEKALHQLYYDPNIENKNLAQKWLMQAQVSPQAWHFSWLLLNMDKVPEIQYSAPAPCTSRSPATGTTSLPDQYESLKSQLFTHITRFAGGSKIVLTRLCVALASLALSMMPEAWPCAVADMVRMFQAEDSNVDGRARCLALLELLTVLPEEFQTSRLPQYRKGQVRSVLAQECGSVFPLLEQLLQQQDSPGFIKQKVLKCFSSWVQLEIPLMDCENLIQAAFTSLQDPELFDTAVEAVVNAISQPDAQRYVNTLLKLIPPVLGLQEQLRQAVQSGDMETSHGICRIAVALGENHSRALLDQVEHWQSFLALVNMIMFCTGIPGHYPVNETTSSLTLTFWYTLQDDILSFEPDKQAVYQQVYRPVYFQLVDVLLHKAQFPSDEEYGFWSSDEKEQFRIYRVDISDTLMYVYEMLGAELLSSLYDKLGRLLTNTEQPSTWQHTEALLYGFQSIAETIDVNYSDVVPGLIGLIPRISISNVQLADTVMFTIGALSEWLADHPVMINNVLPLVLQALGNPELSISSVSTLKKICRECKYDLPPYAANIVAVSQEVLMKQIHKTSQCMWLMQALGFLLSALQVEEILKNLHSLITPYIQQLEKLADETPNPSNKLAIIHILGLLSNLFTTLDISHHDDDHESTEVKKLPVQQGPNPVVVVLQQVFQLIQKVLSKWLNDAQVVESVCAIFEKSVKTLLDDFAPMVPQLCEMLGQMYSTIPQASAIDLTRQLVHIFAHEPAHFPPIKALFLLVTSVTLTLFQQGPRDHPDIVDSFMQLLAQALKRKPDLFLCSNLDVKALFHCGVLSLKFPEAPTVKASCGFFTELLPRCGEIAPVGQVVHENGKVLLQAVLEGVGGQASRSLMDHFAEILFALNKHCFSYLSIWIKEAMQQDGFPSARVSPEQKETFSQQILRERVNKRRVKEMVKEFTLLCRGLHGTEYTADY.

HEAT repeat units lie at residues 19-49, 51-83, 90-130, 137-174, 189-226, 231-263, 271-320, 325-367, 370-433, 435-471, 482-517, 519-553, 557-595, 598-643, 671-711, 715-749, 756-798, 810-840, 855-888, and 892-926; these read ENVE…QAQV, PQAW…RSPA, PDQY…LSMM, AVAD…EFQT, LAQE…SWVQ, LMDC…NAIS, VNTL…ALLD, WQSF…DDIL, EPDK…YEML, AELL…FQSI, VVPG…WLAD, PVMI…CREC, LPPY…LLSA, VEEI…SNLF, PVVV…VKTL, FAPM…VHIF, FPPI…ALKR, VKAL…TELL, ENGK…FALN, and FSYL…QQIL. Positions 40–106 constitute an Importin N-terminal domain; that stretch reads AQKWLMQAQV…KSQLFTHITR (67 aa).

Belongs to the importin beta family.

The protein localises to the cytoplasm. It is found in the nucleus. Functions in nuclear protein import as nuclear transport receptor. Serves as receptor for nuclear localization signals (NLS) in cargo substrates. Is thought to mediate docking of the importin/substrate complex to the nuclear pore complex (NPC) through binding to nucleoporin and the complex is subsequently translocated through the pore by an energy requiring, Ran-dependent mechanism. At the nucleoplasmic side of the NPC, Ran binds to the importin, the importin/substrate complex dissociates and importin is re-exported from the nucleus to the cytoplasm where GTP hydrolysis releases Ran. The directionality of nuclear import is thought to be conferred by an asymmetric distribution of the GTP- and GDP-bound forms of Ran between the cytoplasm and nucleus. The chain is Importin-13 (IPO13) from Gallus gallus (Chicken).